We begin with the raw amino-acid sequence, 318 residues long: Acetyl-coenzyme A carboxylase carboxyl transferase subunit alpha (318 aa).

In terms of domain architecture, CoA carboxyltransferase C-terminal spans 39-293; that stretch reads KLEKKVDKMR…HEALARHLKE (255 aa).

It belongs to the AccA family. Acetyl-CoA carboxylase is a heterohexamer composed of biotin carboxyl carrier protein (AccB), biotin carboxylase (AccC) and two subunits each of ACCase subunit alpha (AccA) and ACCase subunit beta (AccD).

Its subcellular location is the cytoplasm. The enzyme catalyses N(6)-carboxybiotinyl-L-lysyl-[protein] + acetyl-CoA = N(6)-biotinyl-L-lysyl-[protein] + malonyl-CoA. The protein operates within lipid metabolism; malonyl-CoA biosynthesis; malonyl-CoA from acetyl-CoA: step 1/1. Functionally, component of the acetyl coenzyme A carboxylase (ACC) complex. First, biotin carboxylase catalyzes the carboxylation of biotin on its carrier protein (BCCP) and then the CO(2) group is transferred by the carboxyltransferase to acetyl-CoA to form malonyl-CoA. In Geobacter metallireducens (strain ATCC 53774 / DSM 7210 / GS-15), this protein is Acetyl-coenzyme A carboxylase carboxyl transferase subunit alpha.